Reading from the N-terminus, the 505-residue chain is Probable alpha-L-arabinofuranosidase C (505 aa).

Asparagine 81, asparagine 152, asparagine 269, and asparagine 438 each carry an N-linked (GlcNAc...) asparagine glycan.

The protein belongs to the glycosyl hydrolase 51 family.

The protein localises to the secreted. The catalysed reaction is Hydrolysis of terminal non-reducing alpha-L-arabinofuranoside residues in alpha-L-arabinosides.. The protein operates within glycan metabolism; L-arabinan degradation. Its function is as follows. Alpha-L-arabinofuranosidase involved in the degradation of arabinoxylan, a major component of plant hemicellulose. Acts only on small linear 1,5-alpha-linked L-arabinofuranosyl oligosaccharides. This Aspergillus fumigatus (strain ATCC MYA-4609 / CBS 101355 / FGSC A1100 / Af293) (Neosartorya fumigata) protein is Probable alpha-L-arabinofuranosidase C (abfC).